We begin with the raw amino-acid sequence, 107 residues long: Putative double-stranded DNA mimic protein CGSHiGG_01135 (107 aa).

It belongs to the putative dsDNA mimic protein family.

Its function is as follows. May act as a double-stranded DNA (dsDNA) mimic. Probably regulates the activity of a dsDNA-binding protein. This Haemophilus influenzae (strain PittGG) protein is Putative double-stranded DNA mimic protein CGSHiGG_01135.